The sequence spans 174 residues: Shikimate kinase 2 (174 aa).

12–17 lines the ATP pocket; it reads GCGKTT. Mg(2+)-binding residues include T16 and D32. Residues D34, R58, and G79 each contribute to the substrate site. The interval 112-126 is LID domain; it reads RAYPEDDQRPSLTGK. R120 contributes to the ATP binding site. R139 is a binding site for substrate. Q155 is an ATP binding site.

The protein belongs to the shikimate kinase family. AroL subfamily. In terms of assembly, monomer. Requires Mg(2+) as cofactor.

The protein resides in the cytoplasm. It catalyses the reaction shikimate + ATP = 3-phosphoshikimate + ADP + H(+). The protein operates within metabolic intermediate biosynthesis; chorismate biosynthesis; chorismate from D-erythrose 4-phosphate and phosphoenolpyruvate: step 5/7. Functionally, catalyzes the specific phosphorylation of the 3-hydroxyl group of shikimic acid using ATP as a cosubstrate. The protein is Shikimate kinase 2 of Sodalis glossinidius (strain morsitans).